Here is a 144-residue protein sequence, read N- to C-terminus: D-aminoacyl-tRNA deacylase (144 aa).

A Gly-cisPro motif, important for rejection of L-amino acids motif is present at residues 136 to 137 (GP).

Belongs to the DTD family. As to quaternary structure, homodimer.

It localises to the cytoplasm. It catalyses the reaction glycyl-tRNA(Ala) + H2O = tRNA(Ala) + glycine + H(+). The enzyme catalyses a D-aminoacyl-tRNA + H2O = a tRNA + a D-alpha-amino acid + H(+). Functionally, an aminoacyl-tRNA editing enzyme that deacylates mischarged D-aminoacyl-tRNAs. Also deacylates mischarged glycyl-tRNA(Ala), protecting cells against glycine mischarging by AlaRS. Acts via tRNA-based rather than protein-based catalysis; rejects L-amino acids rather than detecting D-amino acids in the active site. By recycling D-aminoacyl-tRNA to D-amino acids and free tRNA molecules, this enzyme counteracts the toxicity associated with the formation of D-aminoacyl-tRNA entities in vivo and helps enforce protein L-homochirality. This is D-aminoacyl-tRNA deacylase from Corynebacterium efficiens (strain DSM 44549 / YS-314 / AJ 12310 / JCM 11189 / NBRC 100395).